The chain runs to 1091 residues: LRR receptor-like serine/threonine-protein kinase RGI3 (1091 aa).

The signal sequence occupies residues 1–24; it reads MPPNIYRLSFFSSLLCFFFIPCFS. Over 25–703 the chain is Extracellular; the sequence is LDQQGQALLS…TTRNSSVVRL (679 aa). An LRR 1 repeat occupies 33 to 56; it reads LSWKSQLNISGDAFSSWHVADTSP. Asn-40 is a glycosylation site (N-linked (GlcNAc...) asparagine). A disulfide bridge links Cys-57 with Cys-64. LRR repeat units follow at residues 67–91, 92–115, 116–140, 142–166, 168–188, 190–213, 214–237, 239–261, 262–285, 287–309, 311–332, 333–357, 359–383, 385–405, 406–429, 431–453, 454–477, 478–501, 503–524, 525–548, 549–572, 574–596, 598–620, 621–644, 645–668, and 669–690; these read RGEV…SLRS, LKSL…EIGD, FTEL…IFRL, KLKT…NLSG, VELM…IGEL, NLQV…IGNC, ENLV…IGNL, RVQT…IGYC, TELQ…IGGL, KLQS…LGNC, ELWL…SFGK, LENL…LTNC, KLTH…NLRS, TMFF…LSQC, RELQ…IFGL, NLTK…IGNC, TNLY…IGNL, KNLN…ISGC, SLEF…TTLP, KSLK…IGLL, TELT…ISTC, SLQL…LGQI, SLAI…RFSD, LKNL…LTDL, QNLV…PFFR, and RLPL…ISTR. Asn-104 is a glycosylation site (N-linked (GlcNAc...) asparagine). The N-linked (GlcNAc...) asparagine glycan is linked to Asn-163. 5 short sequence motifs (small peptide recognition) span residues 173–174, 195–198, 218–223, Tyr-246, and 268–270; these read FD, RAGG, MLGLAE, and YLY. 2 short sequence motifs (small peptide recognition) span residues 316 to 319 and 338 to 340; these read DFSE and ELQ. Residue Asn-356 is glycosylated (N-linked (GlcNAc...) asparagine). 2 consecutive short sequence motifs (small peptide recognition) follow at residues 386–390 and 412–415; these read MFFAW and DLSY. Residue Asn-431 is glycosylated (N-linked (GlcNAc...) asparagine). A Small peptide recognition motif is present at residues 434-438; it reads KLLLL. A glycan (N-linked (GlcNAc...) asparagine) is linked at Asn-452. The short motif at 458–460 is the Small peptide recognition element; that stretch reads RLR. The N-linked (GlcNAc...) asparagine glycan is linked to Asn-604. Residue Asn-651 is glycosylated (N-linked (GlcNAc...) asparagine). Asn-697 carries an N-linked (GlcNAc...) asparagine glycan. Residues 704 to 724 traverse the membrane as a helical segment; it reads TILILVVVTAVLVLMAVYTLV. Residues 725-1091 are Cytoplasmic-facing; sequence RARAAGKQLL…CSFAFSDDSV (367 aa). Positions 760-1046 constitute a Protein kinase domain; it reads LTSANVIGTG…MLTEIRHIDV (287 aa). Residues 766–774 and Lys-788 each bind ATP; that span reads IGTGSSGVV. Residues Tyr-831 and Tyr-870 each carry the phosphotyrosine modification. Residue Asp-883 is the Proton acceptor of the active site. Tyr-933 carries the phosphotyrosine modification.

The protein belongs to the protein kinase superfamily. Ser/Thr protein kinase family. Binds to RGF peptides such as RGF1, GLV5/CLEL1/RGF2, GLV7/CLEL3/RGF3, GLV3/RGF4, GLV10/CLEL7/RGF5 and RGF10/CLELN; these interactions trigger the formation of heterodimers with SERK1, SERK2 or BAK1/SERK3 via LRR regions. Post-translationally, phosphorylated and ubiquitinated upon interaction with RGF1, thus leading to activation a subsequent degradation. Autophosphorylated. As to expression, expressed in roots.

It localises to the cell membrane. The enzyme catalyses L-seryl-[protein] + ATP = O-phospho-L-seryl-[protein] + ADP + H(+). It carries out the reaction L-threonyl-[protein] + ATP = O-phospho-L-threonyl-[protein] + ADP + H(+). Together with RGI1, RGI2, RGI4 and RGI5, acts as a receptor of RGF peptides (e.g. RGF1, GLV5/CLEL1/RGF2, GLV7/CLEL3/RGF3, GLV3/RGF4, GLV10/CLEL7/RGF5 and RGF10/CLELN), peptide hormones which maintain the postembryonic root stem cell niche by regulating the expression levels and patterns of the transcription factor PLETHORA (PLT, e.g. PLT1 and PLT2). Links RGF peptides signal with their downstream components. In Arabidopsis thaliana (Mouse-ear cress), this protein is LRR receptor-like serine/threonine-protein kinase RGI3.